Reading from the N-terminus, the 265-residue chain is Type 1 encapsulin shell protein (265 aa).

Residues 79-81 (RAT) and tryptophan 87 contribute to the FMN site. The tract at residues 184–189 (EAGHYP) is pore-forming loop. Residue glutamate 235 coordinates FMN.

Belongs to the encapsulin family. Family 1 subfamily. This encapsulin nanocompartment is formed by 60 subunits; monomers form pentamers which assemble to form shells. There are 12 pores where the pentamers meet as well as 3-fold axis channels and dimer channels; none are larger than 3-4 Angstroms in diameter. The N-terminus of the protein is inside the shell, the C-terminus is outside. It depends on FMN as a cofactor.

The protein resides in the encapsulin nanocompartment. Functionally, shell component of a type 1 encapsulin nanocompartment. Assembles into proteinaceous shells 23-24 nm in diameter with 2-2.5 nm thick walls. Cargo protein Flp (ferritin-like protein, may store iron) is targeted to the interior via its C-terminal extension. In Thermotoga petrophila (strain ATCC BAA-488 / DSM 13995 / JCM 10881 / RKU-1), this protein is Type 1 encapsulin shell protein.